The chain runs to 299 residues: ATP phosphoribosyltransferase (299 aa).

It belongs to the ATP phosphoribosyltransferase family. Long subfamily. Equilibrium between an active dimeric form, an inactive hexameric form and higher aggregates. Interconversion between the various forms is largely reversible and is influenced by the natural substrates and inhibitors of the enzyme. Requires Mg(2+) as cofactor.

It is found in the cytoplasm. It carries out the reaction 1-(5-phospho-beta-D-ribosyl)-ATP + diphosphate = 5-phospho-alpha-D-ribose 1-diphosphate + ATP. Its pathway is amino-acid biosynthesis; L-histidine biosynthesis; L-histidine from 5-phospho-alpha-D-ribose 1-diphosphate: step 1/9. Feedback inhibited by histidine. Functionally, catalyzes the condensation of ATP and 5-phosphoribose 1-diphosphate to form N'-(5'-phosphoribosyl)-ATP (PR-ATP). Has a crucial role in the pathway because the rate of histidine biosynthesis seems to be controlled primarily by regulation of HisG enzymatic activity. This chain is ATP phosphoribosyltransferase, found in Blochmanniella pennsylvanica (strain BPEN).